The primary structure comprises 160 residues: Transcription elongation factor GreA (160 aa).

The stretch at 10 to 37 (TLEGKAKLENELQELKTVKRKEVVERIK) forms a coiled coil.

Belongs to the GreA/GreB family.

Its function is as follows. Necessary for efficient RNA polymerase transcription elongation past template-encoded arresting sites. The arresting sites in DNA have the property of trapping a certain fraction of elongating RNA polymerases that pass through, resulting in locked ternary complexes. Cleavage of the nascent transcript by cleavage factors such as GreA or GreB allows the resumption of elongation from the new 3'terminus. GreA releases sequences of 2 to 3 nucleotides. In Listeria welshimeri serovar 6b (strain ATCC 35897 / DSM 20650 / CCUG 15529 / CIP 8149 / NCTC 11857 / SLCC 5334 / V8), this protein is Transcription elongation factor GreA.